A 403-amino-acid polypeptide reads, in one-letter code: G2/mitotic-specific cyclin-B3 (403 aa).

Disordered stretches follow at residues 1–86 (MPVA…APPA) and 102–122 (RKTPPADVPVEPEKDSVPEEP). A compositionally biased stretch (polar residues) spans 7–25 (SKAQSSKQPRASKAPSVTE). The D-box signature appears at 51–59 (RSAFGDITN).

The protein belongs to the cyclin family. Cyclin AB subfamily. In terms of assembly, interacts with the CDK1 and CDK2 protein kinases. Ubiquitinated, leading to its degradation.

It is found in the nucleus. Functionally, cyclins are positive regulatory subunits of the cyclin-dependent kinases (CDKs), and thereby play an essential role in the control of the cell cycle, notably via their destruction during cell division. Could be involved at the G2/M (mitosis or meiosis) transition. G2/M cyclins accumulate steadily during G2 and are abruptly destroyed at mitosis. In Gallus gallus (Chicken), this protein is G2/mitotic-specific cyclin-B3 (CCNB3).